Reading from the N-terminus, the 84-residue chain is Acyl carrier protein homolog (84 aa).

Residues 4-79 (HEILLKIKEI…DLVLEVKNLL (76 aa)) form the Carrier domain. O-(pantetheine 4'-phosphoryl)serine is present on serine 39.

Post-translationally, 4'-phosphopantetheine is transferred from CoA to a specific serine of the apo-ACP-like protein.

Its pathway is lipid metabolism; fatty acid biosynthesis. Its function is as follows. Carrier of the growing fatty acid chain in fatty acid biosynthesis. This Mycoplasma genitalium (strain ATCC 33530 / DSM 19775 / NCTC 10195 / G37) (Mycoplasmoides genitalium) protein is Acyl carrier protein homolog.